The chain runs to 101 residues: NAD(P)H-quinone oxidoreductase subunit 4L, chloroplastic (101 aa).

3 consecutive transmembrane segments (helical) span residues 2–22 (MLEH…YGLI), 32–52 (MCLE…SDLF), and 61–81 (IFSI…LAIV).

The protein belongs to the complex I subunit 4L family. NDH is composed of at least 16 different subunits, 5 of which are encoded in the nucleus.

The protein localises to the plastid. The protein resides in the chloroplast thylakoid membrane. It catalyses the reaction a plastoquinone + NADH + (n+1) H(+)(in) = a plastoquinol + NAD(+) + n H(+)(out). The catalysed reaction is a plastoquinone + NADPH + (n+1) H(+)(in) = a plastoquinol + NADP(+) + n H(+)(out). Functionally, NDH shuttles electrons from NAD(P)H:plastoquinone, via FMN and iron-sulfur (Fe-S) centers, to quinones in the photosynthetic chain and possibly in a chloroplast respiratory chain. The immediate electron acceptor for the enzyme in this species is believed to be plastoquinone. Couples the redox reaction to proton translocation, and thus conserves the redox energy in a proton gradient. The polypeptide is NAD(P)H-quinone oxidoreductase subunit 4L, chloroplastic (Nandina domestica (Heavenly bamboo)).